Consider the following 530-residue polypeptide: Lanosterol 14-alpha demethylase CYP51 (530 aa).

Residues 1 to 20 (MSATKSIVGEALEYVNIGLS) are Lumenal-facing. A helical transmembrane segment spans residues 21–41 (HFLALPLAQRISLIIIIPFIY). At 42–530 (NIVWQLLYSL…WEKRNPEQKI (489 aa)) the chain is on the cytoplasmic side. Lysine 116 is covalently cross-linked (Glycyl lysine isopeptide (Lys-Gly) (interchain with G-Cter in ubiquitin)). Tyrosine 126 provides a ligand contact to lanosterol. Glycine 314 provides a ligand contact to itraconazole. Glycyl lysine isopeptide (Lys-Gly) (interchain with G-Cter in ubiquitin) cross-links involve residues lysine 353 and lysine 454. Serine 458 carries the post-translational modification Phosphoserine. Cysteine 470 is a heme binding site.

This sequence belongs to the cytochrome P450 family. Interacts with ERG28. Requires heme as cofactor.

Its subcellular location is the endoplasmic reticulum membrane. It catalyses the reaction a 14alpha-methyl steroid + 3 reduced [NADPH--hemoprotein reductase] + 3 O2 = a Delta(14) steroid + formate + 3 oxidized [NADPH--hemoprotein reductase] + 4 H2O + 4 H(+). The catalysed reaction is a 14alpha-methyl steroid + reduced [NADPH--hemoprotein reductase] + O2 = a 14alpha-hydroxymethyl steroid + oxidized [NADPH--hemoprotein reductase] + H2O + H(+). The enzyme catalyses a 14alpha-hydroxymethyl steroid + reduced [NADPH--hemoprotein reductase] + O2 = a 14alpha-formyl steroid + oxidized [NADPH--hemoprotein reductase] + 2 H2O + H(+). It carries out the reaction a 14alpha-formyl steroid + reduced [NADPH--hemoprotein reductase] + O2 = a Delta(14) steroid + formate + oxidized [NADPH--hemoprotein reductase] + H2O + 2 H(+). It catalyses the reaction lanosterol + 3 reduced [NADPH--hemoprotein reductase] + 3 O2 = 4,4-dimethyl-5alpha-cholesta-8,14,24-trien-3beta-ol + formate + 3 oxidized [NADPH--hemoprotein reductase] + 4 H2O + 4 H(+). The catalysed reaction is lanosterol + reduced [NADPH--hemoprotein reductase] + O2 = 32-hydroxylanosterol + oxidized [NADPH--hemoprotein reductase] + H2O + H(+). The enzyme catalyses 32-hydroxylanosterol + reduced [NADPH--hemoprotein reductase] + O2 = 32-oxolanosterol + oxidized [NADPH--hemoprotein reductase] + 2 H2O + H(+). It carries out the reaction 32-oxolanosterol + reduced [NADPH--hemoprotein reductase] + O2 = 4,4-dimethyl-5alpha-cholesta-8,14,24-trien-3beta-ol + formate + oxidized [NADPH--hemoprotein reductase] + H2O + 2 H(+). It participates in steroid biosynthesis; zymosterol biosynthesis; zymosterol from lanosterol: step 1/6. In terms of biological role, sterol 14alpha-demethylase that plays a critical role in the third module of ergosterol biosynthesis pathway, being ergosterol the major sterol component in fungal membranes that participates in a variety of functions. The third module or late pathway involves the ergosterol synthesis itself through consecutive reactions that mainly occur in the endoplasmic reticulum (ER) membrane. Starting from lanosterol (lanosta-8,24-dien-3beta-ol), it catalyzes the three-step oxidative removal of the 14alpha-methyl group (C-32) of the sterol in the form of formate, and converts the sterol to 4,4-dimethyl-5alpha-cholesta-8,14,24-trien-3beta-ol, which is critical for ergosterol biosynthesis. Can demethylate substrates not intrinsic to yeast, such as eburicol (24-methylene-24,25-dihydrolanosterol) at a similar rate to lanosterol, and at a lower rate the 24,25-dihydrolanosterol (DHL) to 4,4-dimethyl-8,14-cholestadien-3beta-ol. This Saccharomyces cerevisiae (strain ATCC 204508 / S288c) (Baker's yeast) protein is Lanosterol 14-alpha demethylase CYP51.